Here is a 1964-residue protein sequence, read N- to C-terminus: Neurogenic locus notch homolog protein 4 (1964 aa).

A signal peptide spans 1–20 (MQPQLLLLLLLPLNFPVILT). EGF-like domains follow at residues 21 to 60 (RELLCGGSPEPCANGGTCLRLSRGQGICQCAPGFLGETCQ), 61 to 112 (FPDP…DRCQ), 115 to 152 (LEELCPPSFCSNGGHCYVQASGRPQCSCEPGWTGEQCQ), and 153 to 189 (LRDFCSANPCANGGVCLATYPQIQCRCPPGFEGHTCE). At 21–1443 (RELLCGGSPE…TRPSANQLPW (1423 aa)) the chain is on the extracellular side. Disulfide bonds link Cys25-Cys38, Cys32-Cys48, Cys50-Cys59, Cys65-Cys77, Cys71-Cys100, Cys102-Cys111, Cys119-Cys130, Cys124-Cys140, Cys142-Cys151, Cys157-Cys168, Cys162-Cys177, Cys179-Cys188, Cys195-Cys208, Cys202-Cys217, Cys219-Cys228, Cys235-Cys246, Cys240-Cys259, Cys261-Cys270, Cys277-Cys288, Cys282-Cys297, Cys299-Cys308, Cys315-Cys329, Cys323-Cys338, Cys340-Cys349, Cys356-Cys367, Cys361-Cys376, Cys378-Cys387, Cys393-Cys404, Cys398-Cys415, Cys417-Cys426, Cys433-Cys449, Cys443-Cys458, Cys460-Cys469, Cys476-Cys487, Cys481-Cys496, Cys498-Cys507, Cys514-Cys525, Cys519-Cys534, Cys536-Cys545, Cys552-Cys563, Cys557-Cys572, Cys574-Cys583, Cys590-Cys601, Cys595-Cys610, Cys612-Cys621, Cys626-Cys637, Cys631-Cys646, Cys648-Cys655, Cys662-Cys669, Cys664-Cys674, Cys676-Cys685, Cys692-Cys703, Cys697-Cys712, Cys714-Cys723, Cys730-Cys741, Cys735-Cys750, Cys752-Cys761, Cys768-Cys779, Cys773-Cys788, Cys790-Cys799, Cys807-Cys818, Cys812-Cys827, Cys829-Cys838, Cys845-Cys856, Cys850-Cys865, Cys867-Cys876, Cys882-Cys903, Cys897-Cys912, Cys914-Cys923, Cys930-Cys941, Cys935-Cys950, Cys952-Cys961, Cys968-Cys979, Cys973-Cys988, Cys990-Cys999, Cys1006-Cys1019, Cys1011-Cys1028, Cys1030-Cys1039, Cys1046-Cys1057, Cys1051-Cys1069, Cys1071-Cys1080, Cys1087-Cys1098, Cys1092-Cys1110, Cys1112-Cys1121, Cys1130-Cys1142, Cys1136-Cys1155, Cys1157-Cys1166, Cys1174-Cys1187, Cys1183-Cys1199, Cys1210-Cys1234, Cys1216-Cys1229, Cys1225-Cys1241, Cys1247-Cys1273, Cys1255-Cys1268, and Cys1264-Cys1280. Residues 191-229 (DINECFLEPGPCPQGTSCHNTLGSYQCLCPVGQEGPQCK) enclose the EGF-like 5; calcium-binding domain. Residues 231 to 271 (RKGACPPGSCLNGGTCQLVPEGHSTFHLCLCPPGFTGLDCE) enclose the EGF-like 6 domain. The EGF-like 7; calcium-binding domain occupies 273 to 309 (NPDDCVRHQCQNGATCLDGLDTYTCLCPKTWKGWDCS). Positions 311–350 (DIDECEARGPPRCRNGGTCQNTAGSFHCVCVSGWGGAGCE) constitute an EGF-like 8; calcium-binding domain. The EGF-like 9; calcium-binding domain maps to 352–388 (NLDDCAAATCAPGSTCIDRVGSFSCLCPPGRTGLLCH). The region spanning 389-427 (LEDMCLSQPCHVNAQCSTNPLTGSTLCICQPGYSGSTCH) is the EGF-like 10 domain. Residues 429–470 (DLDECQMAQQGPSPCEHGGSCINTPGSFNCLCLPGYTGSRCE) form the EGF-like 11; calcium-binding domain. The region spanning 472 to 508 (DHNECLSQPCHPGSTCLDLLATFHCLCPPGLEGRLCE) is the EGF-like 12; calcium-binding domain. An EGF-like 13; calcium-binding domain is found at 510–546 (EVNECTSNPCLNQAACHDLLNGFQCLCLPGFTGARCE). Positions 548–584 (DMDECSSTPCANGGRCRDQPGAFYCECLPGFEGPHCE) constitute an EGF-like 14; calcium-binding domain. The region spanning 586-622 (EVDECLSDPCPVGASCLDLPGAFFCLCRPGFTGQLCE) is the EGF-like 15; calcium-binding domain. EGF-like domains are found at residues 623-656 (VPLCTPNMCQPGQQCQGQEHRAPCLCPDGSPGCV), 658-686 (AEDNCPCHHGHCQRSLCVCDEGWTGPECE), 688-724 (ELGGCISTPCAHGGTCHPQPSGYNCTCPAGYMGLTCS), 726-762 (EVTACHSGPCLNGGSCSIRPEGYSCTCLPSHTGRHCQ), 764-800 (AVDHCVSASCLNGGTCVNKPGTFFCLCATGFQGLHCE), 803-839 (TNPSCADSPCRNKATCQDTPRGARCLCSPGYTGSSCQ), 841-877 (LIDLCARKPCPHTARCLQSGPSFQCLCLQGWTGALCD), 878-924 (FPLS…KLCQ), 926-962 (NVNPCEPNPCHHGSTCVPQPSGYVCQCAPGYEGQNCS), 964-1000 (VLDACQSQPCHNHGTCTSRPGGFHCACPPGFVGLRCE), 1002-1040 (DVDECLDRPCHPSGTAACHSLANAFYCQCLPGHTGQRCE), 1042-1081 (EMDLCQSQPCSNGGSCEITTGPPPGFTCHCPKGFEGPTCS), 1083-1122 (KALSCGIHHCHNGGLCLPSPKPGSPPLCACLSGFGGPDCL), and 1126-1167 (APPG…PRCQ). Asn711 carries N-linked (GlcNAc...) asparagine glycosylation. Residue Asn960 is glycosylated (N-linked (GlcNAc...) asparagine). Residue Asn1139 is glycosylated (N-linked (GlcNAc...) asparagine). LNR repeat units lie at residues 1166-1209 (CQRP…PWKG), 1210-1241 (CPPHSQCWLLFRDGRCHPQCDSEECLFDGYDC), and 1247-1287 (CIPA…GEDS). Residues 1345-1369 (EELSGARDSSSWERQAPPTQPLGKE) are disordered. Residues 1444-1464 (PILCSPVVGVLLLALGALLVL) form a helical membrane-spanning segment. The Cytoplasmic portion of the chain corresponds to 1465–1964 (QLIRRRRREH…PLNSVVRNLN (500 aa)). Positions 1516–1535 (VDEDGVAMCSGPEEGEAEET) are disordered. ANK repeat units lie at residues 1628-1657 (TGETPLHLAARFSRPTAARRLLEAGANPNQ), 1661-1691 (AGRTPLHTAVAADAREVCQLLLASRQTTVDA), 1695-1724 (DGTTPLMLAARLAVEDLVEELIAARADVGA), 1728-1757 (RGKTALHWAAAVNNARAARSLLQAGADKDA), and 1761-1790 (REQTPLFLAAREGAVEVAQLLLELGAARGL). Residues 1879 to 1907 (RSGSCGGPTTRGRRFSAGSRGRRGARASQ) form a disordered region.

It belongs to the NOTCH family. Heterodimer of a C-terminal fragment N(TM) and a N-terminal fragment N(EC) which are probably linked by disulfide bonds. Interacts with MAML1, MAML2 and MAML3 which act as transcriptional coactivators for NOTCH4. In terms of processing, synthesized in the endoplasmic reticulum as an inactive form which is proteolytically cleaved by a furin-like convertase in the trans-Golgi network before it reaches the plasma membrane to yield an active, ligand-accessible form. Cleavage results in a C-terminal fragment N(TM) and a N-terminal fragment N(EC). Following ligand binding, it is cleaved by TNF-alpha converting enzyme (TACE) to yield a membrane-associated intermediate fragment called notch extracellular truncation (NEXT). This fragment is then cleaved by presenilin dependent gamma-secretase to release a notch-derived peptide containing the intracellular domain (NICD) from the membrane. Phosphorylated. Highly expressed in lung, moderately in heart kidney, and at lower levels in the ovary and skeletal muscle. A very low expression is seen in the brain, intestine, liver and testis.

It localises to the cell membrane. Its subcellular location is the nucleus. Functionally, functions as a receptor for membrane-bound ligands Jagged1, Jagged2 and Delta1 to regulate cell-fate determination. Upon ligand activation through the released notch intracellular domain (NICD) it forms a transcriptional activator complex with RBPJ/RBPSUH and activates genes of the enhancer of split locus. Affects the implementation of differentiation, proliferation and apoptotic programs. May regulate branching morphogenesis in the developing vascular system. This Mus musculus (Mouse) protein is Neurogenic locus notch homolog protein 4.